The following is a 1912-amino-acid chain: Vitellogenin-1 (1912 aa).

The N-terminal stretch at 1 to 15 (MRGLISALVLTLVGS) is a signal peptide. A Vitellogenin domain is found at 24 to 663 (FGENKVYTYN…AGSLIPTMAV (640 aa)). An N-linked (GlcNAc...) asparagine glycan is attached at Asn163. The disordered stretch occupies residues 948 to 972 (DSASGETDNIRDRQSVEDVSSGNSF). An N-linked (GlcNAc...) asparagine glycan is attached at Asn991. Disordered stretches follow at residues 1080–1329 (KILD…SYDI) and 1351–1432 (HWHS…RERN). Composition is skewed to low complexity over residues 1092 to 1124 (NSRSSSSSASSISESSESTTSTPSSSDSDNRAS) and 1150 to 1235 (SSSS…SSSK). An N-linked (GlcNAc...) asparagine glycan is attached at Asn1206. Residues 1259–1269 (EGERSVHEQKQ) are compositionally biased toward basic and acidic residues. Low complexity predominate over residues 1273–1299 (SSSSSSSRASSNSRSTSSSTSSSSESS). Residues 1306–1316 (WKQDREAETKR) are compositionally biased toward basic and acidic residues. Residues 1319-1328 (SQFNSHSSYD) show a composition bias toward polar residues. Over residues 1357–1381 (RTSSSSSSSSSESGSSHSNSSSSDS) the composition is skewed to low complexity. The N-linked (GlcNAc...) asparagine glycan is linked to Asn1375. Residues 1397 to 1409 (SHRHGEKAAHSSR) are compositionally biased toward basic residues. Residues 1640–1818 (STCEVSKGDF…SWVLLEETCS (179 aa)) enclose the VWFD domain. Disulfide bonds link Cys1642-Cys1781 and Cys1665-Cys1817. 3 N-linked (GlcNAc...) asparagine glycosylation sites follow: Asn1662, Asn1698, and Asn1703.

Post-translationally, phosvitin, an egg yolk storage protein, is one of the most highly phosphorylated (10%) proteins in nature. Cathepsin D is responsible for intraoocytic processing of vitellogenin. In terms of processing, may contain intrachain disulfide bonds. Produced by the liver, secreted into the blood and then sequestered by receptor mediated endocytosis into growing oocytes, where it is generally cleaved, giving rise to the respective yolk components.

Precursor of the egg-yolk proteins that are sources of nutrients during early development of oviparous organisms. Functionally, phosvitin is believed to be of importance in sequestering calcium, iron and other cations for the developing embryo. The polypeptide is Vitellogenin-1 (VTG1) (Gallus gallus (Chicken)).